A 290-amino-acid chain; its full sequence is uncharacterized protein (290 aa).

Disordered regions lie at residues 1–98 (MLGQ…SRRV) and 209–236 (LSGQRGAGPGNSAYTPRRSQGGPRAATT). Residues 63–76 (KPDRVRPGQRDRIG) show a composition bias toward basic and acidic residues. Positions 87 to 97 (AGQARAASSRR) are enriched in low complexity. A helical membrane pass occupies residues 261-281 (CILTALLAVSFHSIGVVIMTS).

It localises to the membrane. This is an uncharacterized protein from Homo sapiens (Human).